The primary structure comprises 557 residues: Dihydroxy-acid dehydratase (557 aa).

Mg(2+) is bound at residue Asp78. A [2Fe-2S] cluster-binding site is contributed by Cys119. The Mg(2+) site is built by Asp120 and Lys121. Residue Lys121 is modified to N6-carboxylysine. Residue Cys192 coordinates [2Fe-2S] cluster. Glu442 contributes to the Mg(2+) binding site. Catalysis depends on Ser468, which acts as the Proton acceptor.

Belongs to the IlvD/Edd family. In terms of assembly, homodimer. [2Fe-2S] cluster serves as cofactor. Requires Mg(2+) as cofactor.

The catalysed reaction is (2R)-2,3-dihydroxy-3-methylbutanoate = 3-methyl-2-oxobutanoate + H2O. It catalyses the reaction (2R,3R)-2,3-dihydroxy-3-methylpentanoate = (S)-3-methyl-2-oxopentanoate + H2O. It participates in amino-acid biosynthesis; L-isoleucine biosynthesis; L-isoleucine from 2-oxobutanoate: step 3/4. The protein operates within amino-acid biosynthesis; L-valine biosynthesis; L-valine from pyruvate: step 3/4. Its function is as follows. Functions in the biosynthesis of branched-chain amino acids. Catalyzes the dehydration of (2R,3R)-2,3-dihydroxy-3-methylpentanoate (2,3-dihydroxy-3-methylvalerate) into 2-oxo-3-methylpentanoate (2-oxo-3-methylvalerate) and of (2R)-2,3-dihydroxy-3-methylbutanoate (2,3-dihydroxyisovalerate) into 2-oxo-3-methylbutanoate (2-oxoisovalerate), the penultimate precursor to L-isoleucine and L-valine, respectively. This is Dihydroxy-acid dehydratase from Bacillus anthracis (strain A0248).